A 1673-amino-acid polypeptide reads, in one-letter code: Protein TIC 214 (1673 aa).

Transmembrane regions (helical) follow at residues 32–52 (AGLY…ILLI), 70–90 (LILG…YIAF), 93–113 (PYTL…GNNL), 130–150 (LEIL…TCIF), 170–190 (MVFL…VLMC), and 218–238 (FFLV…IQSL). 2 stretches are compositionally biased toward basic and acidic residues: residues 264–276 (LKKS…GKST) and 283–298 (SHEK…SKLE). Disordered stretches follow at residues 264–302 (LKKS…NEDE), 547–611 (VVFD…YSIR), 1120–1146 (NKQS…TDNL), and 1370–1433 (QQNQ…SEDD). Polar residues predominate over residues 562 to 586 (DNGNIQNNSSDKTINPQNNLTNLKP). Positions 597 to 611 (TTEKEPKDDKSYSIR) are enriched in basic and acidic residues. Residues 1120–1135 (NKQSLQKRNSSGNSNL) show a composition bias toward polar residues. Residues 1370 to 1379 (QQNQTTTKMN) are compositionally biased toward low complexity. Basic and acidic residues-rich tracts occupy residues 1380–1399 (TETK…KKTE) and 1406–1423 (TKNK…KETE).

Belongs to the TIC214 family. As to quaternary structure, part of the Tic complex.

The protein resides in the plastid. It is found in the chloroplast inner membrane. In terms of biological role, involved in protein precursor import into chloroplasts. May be part of an intermediate translocation complex acting as a protein-conducting channel at the inner envelope. The protein is Protein TIC 214 of Cuscuta gronovii (Common dodder).